Consider the following 439-residue polypeptide: Keratin, type I cytoskeletal 40 (439 aa).

Positions 1 to 89 (MASDGSPSCC…CEEGSFNSNE (89 aa)) are head. The IF rod domain maps to 89 to 400 (EKETMQFLND…GLLEKEDSRL (312 aa)). The segment at 90–124 (KETMQFLNDRLASYLERVRSLEENNAELECRIREQ) is coil 1A. Residues 125 to 135 (CEPNAPLVCPD) are linker 1. Residues 136 to 236 (YQRYFDTIEE…HEEEVNLLRE (101 aa)) form a coil 1B region. The tract at residues 237–252 (QLGDRLSVELDTAPTV) is linker 12. Positions 253 to 396 (DLNKVLDEMR…NTYRGLLEKE (144 aa)) are coil 2. Residues 397-439 (DSRLPCNPGSGAPMPNSTCEPCSNSMCEPCSAYVICTVENCCA) form a tail region.

It belongs to the intermediate filament family. As to quaternary structure, heterotetramer of two type I and two type II keratins.

May play a role in late hair differentiation. The protein is Keratin, type I cytoskeletal 40 (Krt40) of Mus musculus (Mouse).